We begin with the raw amino-acid sequence, 237 residues long: Sulfhydrogenase 2 subunit delta (237 aa).

8 residues coordinate [4Fe-4S] cluster: C11, C14, C83, C132, C160, C163, C170, and C179. Residues C188, C192, C199, and C202 each contribute to the [3Fe-4S] cluster site.

It belongs to the [NiFe]/[NiFeSe] hydrogenase small subunit family. Dimer of heterotetramer of alpha, beta, gamma and delta subunits. The nickel-containing alpha and delta subunits constitute the hydrogenase activity. The beta and gamma subunits (flavin-containing dimer) constitute the sulfur reductase activity. Requires Ni(2+) as cofactor. The cofactor is [4Fe-4S] cluster. [3Fe-4S] cluster is required as a cofactor.

The protein resides in the cytoplasm. The enzyme catalyses H2 + NADP(+) = NADPH + H(+). It catalyses the reaction H2 + NAD(+) = NADH + H(+). Functionally, part of a bifunctional enzyme complex that functions as a hydrogen-evolving hydrogenase with sulfur-reducing activity. May play a role in hydrogen cycling during fermentative growth. Activity exhibited with NAD in addition to NADPH. The alpha and delta subunits form the hydrogenase component that catalyzes the reduction of protons to evolve hydrogen. This is Sulfhydrogenase 2 subunit delta from Pyrococcus furiosus (strain ATCC 43587 / DSM 3638 / JCM 8422 / Vc1).